Reading from the N-terminus, the 186-residue chain is Elongation factor P (186 aa).

The protein belongs to the elongation factor P family.

It is found in the cytoplasm. It participates in protein biosynthesis; polypeptide chain elongation. In terms of biological role, involved in peptide bond synthesis. Stimulates efficient translation and peptide-bond synthesis on native or reconstituted 70S ribosomes in vitro. Probably functions indirectly by altering the affinity of the ribosome for aminoacyl-tRNA, thus increasing their reactivity as acceptors for peptidyl transferase. The sequence is that of Elongation factor P from Crocosphaera subtropica (strain ATCC 51142 / BH68) (Cyanothece sp. (strain ATCC 51142)).